A 60-amino-acid chain; its full sequence is Large ribosomal subunit protein eL37 (60 aa).

Residues cysteine 19, cysteine 22, cysteine 34, and cysteine 37 each coordinate Zn(2+). A C4-type zinc finger spans residues cysteine 19 to cysteine 37.

The protein belongs to the eukaryotic ribosomal protein eL37 family. It depends on Zn(2+) as a cofactor.

In terms of biological role, binds to the 23S rRNA. The chain is Large ribosomal subunit protein eL37 from Methanosphaerula palustris (strain ATCC BAA-1556 / DSM 19958 / E1-9c).